A 457-amino-acid chain; its full sequence is Multidrug resistance protein MdtK (457 aa).

Topologically, residues 1–10 (MQKYISEARL) are cytoplasmic. The chain crosses the membrane as a helical span at residues 11–31 (LLALAIPVILAQIAQTAMGFV). The Periplasmic segment spans residues 32–52 (DTVMAGGYSATDMAAVAIGTS). A helical transmembrane segment spans residues 53–73 (IWLPAILFGHGLLLALTPVIA). At 74-92 (QLNGSGRRERIAHQVRQGF) the chain is on the cytoplasmic side. A helical membrane pass occupies residues 93–113 (WLAGFVSVLIMLVLWNAGYII). Residues 114 to 126 (RSMENIDPALADK) are Periplasmic-facing. Residues 127 to 147 (AVGYLRALLWGAPGYLFFQVA) form a helical membrane-spanning segment. The Cytoplasmic segment spans residues 148 to 159 (RNQCEGLAKTKP). Residues 160–180 (GMVMGFIGLLVNIPVNYIFIY) traverse the membrane as a helical segment. Over 181–191 (GHFGMPELSGV) the chain is Periplasmic. Residues 192-212 (GCGVATAAVYWAMFLAMVSYI) traverse the membrane as a helical segment. Over 213–242 (KRARSMRDIRNEKGTAKPDPAVMKRLIQLG) the chain is Cytoplasmic. A helical transmembrane segment spans residues 243–263 (LPIALALFFEVTLFAVVALLV). Residues 264 to 275 (SPLGIVDVAGHQ) lie on the Periplasmic side of the membrane. A helical membrane pass occupies residues 276-296 (IALNFSSLMFVLPMSLAAAVT). The Cytoplasmic segment spans residues 297–313 (IRVGYRLGQGSTLDAQT). A helical membrane pass occupies residues 314–334 (AARTGLMVGVCMATLTAIFTV). The Periplasmic portion of the chain corresponds to 335-349 (SLREQIALLYNDNPE). A helical transmembrane segment spans residues 350–370 (VVTLAAHLMLLAAVYQISDSI). Residues 371–386 (QVIGSGILRGYKDTRS) are Cytoplasmic-facing. The helical transmembrane segment at 387 to 407 (IFYITFTAYWVLGLPSGYILA) threads the bilayer. The Periplasmic portion of the chain corresponds to 408–417 (LTDLVVEPMG). The helical transmembrane segment at 418 to 438 (PAGFWIGFIIGLTSAAIMMML) threads the bilayer. The Cytoplasmic portion of the chain corresponds to 439-457 (RMRFLQRLPSAIILQRASR).

Belongs to the multi antimicrobial extrusion (MATE) (TC 2.A.66.1) family. MdtK subfamily.

The protein resides in the cell inner membrane. Its function is as follows. Multidrug efflux pump that functions probably as a Na(+)/drug antiporter. The chain is Multidrug resistance protein MdtK from Shigella dysenteriae serotype 1 (strain Sd197).